A 149-amino-acid polypeptide reads, in one-letter code: Conglutin delta 3 (149 aa).

The N-terminal stretch at Met1–Ala22 is a signal peptide. 4 disulfides stabilise this stretch: Cys30-Cys98, Cys42-Cys86, Cys87-Cys134, and Cys100-Cys142.

It belongs to the 2S seed storage albumins family. As to quaternary structure, heterodimer of a small chain and a large chain; disulfide-linked.

The protein resides in the endoplasmic reticulum. In Lupinus angustifolius (Narrow-leaved blue lupine), this protein is Conglutin delta 3.